Here is a 223-residue protein sequence, read N- to C-terminus: UPF0441 protein YgiB (223 aa).

The segment at 201-223 (ESVAKQSTMQRSAAGTSTRSMGG) is disordered. The segment covering 204 to 223 (AKQSTMQRSAAGTSTRSMGG) has biased composition (polar residues).

It belongs to the UPF0441 family.

The polypeptide is UPF0441 protein YgiB (Salmonella gallinarum (strain 287/91 / NCTC 13346)).